The sequence spans 331 residues: Glycerol-3-phosphate dehydrogenase [NAD(P)+] (331 aa).

Positions 10, 11, 31, 32, and 105 each coordinate NADPH. Lysine 105 and glycine 135 together coordinate sn-glycerol 3-phosphate. Alanine 139 lines the NADPH pocket. Lysine 190, aspartate 243, serine 253, arginine 254, and asparagine 255 together coordinate sn-glycerol 3-phosphate. Lysine 190 functions as the Proton acceptor in the catalytic mechanism. Residue arginine 254 participates in NADPH binding. 2 residues coordinate NADPH: valine 279 and glutamate 281.

Belongs to the NAD-dependent glycerol-3-phosphate dehydrogenase family.

It localises to the cytoplasm. It carries out the reaction sn-glycerol 3-phosphate + NAD(+) = dihydroxyacetone phosphate + NADH + H(+). It catalyses the reaction sn-glycerol 3-phosphate + NADP(+) = dihydroxyacetone phosphate + NADPH + H(+). Its pathway is membrane lipid metabolism; glycerophospholipid metabolism. Catalyzes the reduction of the glycolytic intermediate dihydroxyacetone phosphate (DHAP) to sn-glycerol 3-phosphate (G3P), the key precursor for phospholipid synthesis. The chain is Glycerol-3-phosphate dehydrogenase [NAD(P)+] from Corynebacterium diphtheriae (strain ATCC 700971 / NCTC 13129 / Biotype gravis).